The following is a 99-amino-acid chain: Probable non-specific lipid-transfer protein AKCS9 (99 aa).

The first 33 residues, methionine 1–threonine 33, serve as a signal peptide directing secretion. Intrachain disulfides connect cysteine 34–cysteine 68, cysteine 42–cysteine 56, cysteine 57–cysteine 92, and cysteine 66–cysteine 99.

Belongs to the plant LTP family. In terms of tissue distribution, expressed in most tissues except nodules.

In terms of biological role, potential lipid transfer protein. The polypeptide is Probable non-specific lipid-transfer protein AKCS9 (Vigna unguiculata (Cowpea)).